The primary structure comprises 1690 residues: Lysine-specific demethylase 5A (1690 aa).

One can recognise a JmjN domain in the interval 19–60; the sequence is CPVFEPSWEEFTDPLSFIGRIRPLAEKTGICKIRPPKDWQPP. Residues 84-174 form the ARID domain; sequence TRVRLDFLDQ…ILYPYELFQS (91 aa). Residue lysine 191 forms a Glycyl lysine isopeptide (Lys-Gly) (interchain with G-Cter in SUMO2) linkage. Serine 204 is modified (phosphoserine). The PHD-type 1 zinc-finger motif lies at 293–343; the sequence is LYVCMFCGRGNNEDKLLLCDGCDDSYHTFCLIPPLPDVPKGDWRCPKCVAE. Tyrosine 409 serves as a coordination point for 2-oxoglutarate. Residues 419–423 carry the GSGFP motif motif; it reads GSGFP. The JmjC domain maps to 437–603; that stretch reads EYALSGWNLN…IGRQCVNHYR (167 aa). The Fe cation site is built by histidine 483 and glutamate 485. Residues serine 491, asparagine 493, and lysine 501 each coordinate 2-oxoglutarate. Histidine 571 is a Fe cation binding site. The C5HC2 zinc-finger motif lies at 676 to 728; that stretch reads CSACRTTCFLSALTCSCNPERLVCLYHPTDLCPCPMQKKCLRYRYPLEDLPSL. Lysine 1007 participates in a covalent cross-link: Glycyl lysine isopeptide (Lys-Gly) (interchain with G-Cter in SUMO2). Serine 1111 is modified (phosphoserine). Residues 1161–1218 form a PHD-type 2 zinc finger; that stretch reads VKFCICRKTASGFMLQCELCKDWFHNSCVPLPKSSSQKKGSSWQAKEVKFLCPLCMRS. 2 disordered regions span residues 1327-1348 and 1407-1433; these read SVSS…SDED and KSCS…LEPP. Phosphoserine occurs at positions 1330 and 1331. The segment covering 1337–1348 has biased composition (acidic residues); it reads DYDDEETDSDED. A Phosphothreonine modification is found at threonine 1343. Serine 1345 bears the Phosphoserine mark. 2 positions are modified to phosphoserine: serine 1438 and serine 1488. 2 stretches are compositionally biased toward basic and acidic residues: residues 1490-1503 and 1520-1530; these read EEKP…DSSE and GKQKSKELKKM. 2 disordered regions span residues 1490-1509 and 1516-1543; these read EEKP…RKRK and LFGE…LGAD. Tyrosine 1595 carries the post-translational modification Phosphotyrosine. Phosphoserine occurs at positions 1598 and 1603. The PHD-type 3 zinc-finger motif lies at 1607–1661; the sequence is NAVCAAQNCQRPCKDKVDWVQCDGGCDEWFHQVCVGVSPEMAENEDYICINCAKK. The segment at 1623–1690 is interaction with LMO2; it reads VDWVQCDGGC…LPMEDLKETS (68 aa). Serine 1666 is subject to Phosphoserine.

It belongs to the JARID1 histone demethylase family. In terms of assembly, interacts with SUZ12; the interaction is direct. Interacts with the viral protein-binding domain of RB1. Interacts with ESR1, MYC, MYCN and LMO2. Interacts with HDAC1; this interaction impairs histone deacetylation by HDAC1. Interacts with BMAL1 and CLOCK. Interacts (via PHD-type 1 zinc finger) with histone H3 unmodified at 'Lys-4' and (via PHD-type 3 zinc finger) with histone H3 di- and trimethylated at 'Lys-4'. Fe(2+) is required as a cofactor.

The protein resides in the nucleus. Its subcellular location is the nucleolus. It carries out the reaction N(6),N(6),N(6)-trimethyl-L-lysyl(4)-[histone H3] + 3 2-oxoglutarate + 3 O2 = L-lysyl(4)-[histone H3] + 3 formaldehyde + 3 succinate + 3 CO2. The inhibitors KDOAM-25, CPI-455 and others inhibits its demethylase activity, resulting to cell growth arrest in cancer cells. Functionally, histone demethylase that specifically demethylates 'Lys-4' of histone H3, thereby playing a central role in histone code. Does not demethylate histone H3 'Lys-9', H3 'Lys-27', H3 'Lys-36', H3 'Lys-79' or H4 'Lys-20'. Demethylates trimethylated and dimethylated but not monomethylated H3 'Lys-4'. Regulates specific gene transcription through DNA-binding on 5'-CCGCCC-3' motif. May stimulate transcription mediated by nuclear receptors. Involved in transcriptional regulation of Hox proteins during cell differentiation. May participate in transcriptional repression of cytokines such as CXCL12. Plays a role in the regulation of the circadian rhythm and in maintaining the normal periodicity of the circadian clock. In a histone demethylase-independent manner, acts as a coactivator of the CLOCK-BMAL1-mediated transcriptional activation of PER1/2 and other clock-controlled genes and increases histone acetylation at PER1/2 promoters by inhibiting the activity of HDAC1. Seems to act as a transcriptional corepressor for some genes such as MT1F and to favor the proliferation of cancer cells. The protein is Lysine-specific demethylase 5A of Homo sapiens (Human).